We begin with the raw amino-acid sequence, 400 residues long: tRNA-specific 2-thiouridylase MnmA (400 aa).

Residues 19-26 and L45 contribute to the ATP site; that span reads AMSGGVDS. The active-site Nucleophile is the C113. A disulfide bridge links C113 with C210. G137 provides a ligand contact to ATP. Positions 160–162 are interaction with tRNA; the sequence is RDQ. C210 functions as the Cysteine persulfide intermediate in the catalytic mechanism.

It belongs to the MnmA/TRMU family.

Its subcellular location is the cytoplasm. It carries out the reaction S-sulfanyl-L-cysteinyl-[protein] + uridine(34) in tRNA + AH2 + ATP = 2-thiouridine(34) in tRNA + L-cysteinyl-[protein] + A + AMP + diphosphate + H(+). In terms of biological role, catalyzes the 2-thiolation of uridine at the wobble position (U34) of tRNA, leading to the formation of s(2)U34. This is tRNA-specific 2-thiouridylase MnmA from Rhodopseudomonas palustris (strain BisB18).